The chain runs to 760 residues: Xaa-Pro dipeptidyl-peptidase (760 aa).

Active-site charge relay system residues include Ser-349, Asp-469, and His-499.

It belongs to the peptidase S15 family. Homodimer.

Its subcellular location is the cytoplasm. The enzyme catalyses Hydrolyzes Xaa-Pro-|- bonds to release unblocked, N-terminal dipeptides from substrates including Ala-Pro-|-p-nitroanilide and (sequentially) Tyr-Pro-|-Phe-Pro-|-Gly-Pro-|-Ile.. In terms of biological role, removes N-terminal dipeptides sequentially from polypeptides having unsubstituted N-termini provided that the penultimate residue is proline. The protein is Xaa-Pro dipeptidyl-peptidase of Streptococcus pyogenes serotype M4 (strain MGAS10750).